Reading from the N-terminus, the 458-residue chain is uncharacterized protein (458 aa).

12 helical membrane-spanning segments follow: residues 26-46, 47-67, 95-115, 125-145, 160-180, 208-228, 251-271, 278-298, 342-362, 365-385, 409-429, and 432-452; these read LIAIGGAIGTGLFLGSGKSIH, FAGPSILFAYMITGIICFLIM, AAFITGWTYWFCWISIAMADL, WLPGVPQWVPGLIALIILLIM, FALIKVIAILALIVIGLVMIF, GFILSFQMVVFAFVGIELVGL, VLLFYIGALLVIMSIYPWDII, FVQVFVAVGIVGAASIINFVV, ALFFSAIVILIGVTLNYIMPE, FTLITSISTVCFIYIWGITVI, PFTNYLILAFLAFVLVVLALA, and TRVSLFVTPVWFILLIVIYKV.

The protein belongs to the amino acid-polyamine-organocation (APC) superfamily.

The protein resides in the cell membrane. Probable amino-acid or metabolite transport protein. This is an uncharacterized protein from Bacillus subtilis (strain 168).